The primary structure comprises 425 residues: Serine hydroxymethyltransferase 2 (425 aa).

(6S)-5,6,7,8-tetrahydrofolate contacts are provided by residues L121 and G125–L127. N6-(pyridoxal phosphate)lysine is present on K230.

Belongs to the SHMT family. Homodimer. Pyridoxal 5'-phosphate is required as a cofactor.

It localises to the cytoplasm. The enzyme catalyses (6R)-5,10-methylene-5,6,7,8-tetrahydrofolate + glycine + H2O = (6S)-5,6,7,8-tetrahydrofolate + L-serine. It participates in one-carbon metabolism; tetrahydrofolate interconversion. The protein operates within amino-acid biosynthesis; glycine biosynthesis; glycine from L-serine: step 1/1. Its function is as follows. Catalyzes the reversible interconversion of serine and glycine with tetrahydrofolate (THF) serving as the one-carbon carrier. This reaction serves as the major source of one-carbon groups required for the biosynthesis of purines, thymidylate, methionine, and other important biomolecules. Also exhibits THF-independent aldolase activity toward beta-hydroxyamino acids, producing glycine and aldehydes, via a retro-aldol mechanism. This is Serine hydroxymethyltransferase 2 from Mycobacterium tuberculosis (strain CDC 1551 / Oshkosh).